The chain runs to 211 residues: MDLSDIRREYTRGGLRRNDLPDEPLPLFKKWLQQAIDAKIADPTAMTVATVDESGQPFQRIVLLKHFDRDGFIFYTNLGSRKALHLSHNSKISLHFPWHAIERQVHITGEVEKLSSLEVMKYFTSRPKESQIAAWASKQSNRISARQALEGKYLELKQKFAQGKVPVPTFWGGYRVKINSIEFWQGGENRLHDRFIYSHESSHWNIDRLAP.

Substrate is bound by residues 7 to 10 (RREY) and Lys65. FMN contacts are provided by residues 60-65 (RIVLLK), 75-76 (YT), Arg81, Lys82, and Gln104. Residues Tyr122, Arg126, and Ser130 each coordinate substrate. Residues 139-140 (QS) and Trp184 each bind FMN. Substrate is bound at residue 190-192 (RLH). Residue Arg194 participates in FMN binding.

It belongs to the pyridoxamine 5'-phosphate oxidase family. As to quaternary structure, homodimer. FMN is required as a cofactor.

It catalyses the reaction pyridoxamine 5'-phosphate + O2 + H2O = pyridoxal 5'-phosphate + H2O2 + NH4(+). The catalysed reaction is pyridoxine 5'-phosphate + O2 = pyridoxal 5'-phosphate + H2O2. Its pathway is cofactor metabolism; pyridoxal 5'-phosphate salvage; pyridoxal 5'-phosphate from pyridoxamine 5'-phosphate: step 1/1. It functions in the pathway cofactor metabolism; pyridoxal 5'-phosphate salvage; pyridoxal 5'-phosphate from pyridoxine 5'-phosphate: step 1/1. In terms of biological role, catalyzes the oxidation of either pyridoxine 5'-phosphate (PNP) or pyridoxamine 5'-phosphate (PMP) into pyridoxal 5'-phosphate (PLP). The sequence is that of Pyridoxine/pyridoxamine 5'-phosphate oxidase from Photobacterium profundum (strain SS9).